A 385-amino-acid polypeptide reads, in one-letter code: ATP synthase subunit a-1 (385 aa).

Residues 1–133 (MRRIFLFDEN…ALNIVGQAAA (133 aa)) constitute a propeptide that is removed on maturation. 7 consecutive transmembrane segments (helical) span residues 154-174 (FSFTNSSLFMLLTLSFFLLLI), 220-240 (FFPCILVTFLFLLFCNLQGMI), 249-269 (HFLITLALSFSIFIGITIVGF), 276-296 (FFSFLLPAGVPLPLAPFLVLL), 316-336 (MMAGHSLVKILSGFAWTMLCM), 339-359 (IFYFIGALGPLFIVLALTGLE), and 362-382 (VAILQAYVFTILICIYLNDAI).

Belongs to the ATPase A chain family. In terms of assembly, F-type ATPases have 2 components, CF(1) - the catalytic core - and CF(0) - the membrane proton channel. CF(1) has five subunits: alpha(3), beta(3), gamma(1), delta(1), epsilon(1). CF(0) has three main subunits: a, b and c.

The protein resides in the mitochondrion inner membrane. Mitochondrial membrane ATP synthase (F(1)F(0) ATP synthase or Complex V) produces ATP from ADP in the presence of a proton gradient across the membrane which is generated by electron transport complexes of the respiratory chain. F-type ATPases consist of two structural domains, F(1) - containing the extramembraneous catalytic core and F(0) - containing the membrane proton channel, linked together by a central stalk and a peripheral stalk. During catalysis, ATP synthesis in the catalytic domain of F(1) is coupled via a rotary mechanism of the central stalk subunits to proton translocation. Key component of the proton channel; it may play a direct role in the translocation of protons across the membrane. The polypeptide is ATP synthase subunit a-1 (ATP6-1) (Arabidopsis thaliana (Mouse-ear cress)).